The following is an 877-amino-acid chain: Leucine--tRNA ligase (877 aa).

Residues 43-53 (PYPSGRIHMGH) carry the 'HIGH' region motif. Positions 628–632 (KMSKS) match the 'KMSKS' region motif. Residue lysine 631 coordinates ATP.

The protein belongs to the class-I aminoacyl-tRNA synthetase family.

It is found in the cytoplasm. It catalyses the reaction tRNA(Leu) + L-leucine + ATP = L-leucyl-tRNA(Leu) + AMP + diphosphate. The chain is Leucine--tRNA ligase from Brucella anthropi (strain ATCC 49188 / DSM 6882 / CCUG 24695 / JCM 21032 / LMG 3331 / NBRC 15819 / NCTC 12168 / Alc 37) (Ochrobactrum anthropi).